We begin with the raw amino-acid sequence, 532 residues long: Fatty-acid amide hydrolase 2-A (532 aa).

The chain crosses the membrane as a helical span at residues 9 to 29; that stretch reads FLGRLLRAVVWILFAAFKLFA. Catalysis depends on charge relay system residues Lys-129 and Ser-204. Ser-228 acts as the Acyl-ester intermediate in catalysis.

It belongs to the amidase family.

It is found in the membrane. The catalysed reaction is N-(5Z,8Z,11Z,14Z-eicosatetraenoyl)-ethanolamine + H2O = ethanolamine + (5Z,8Z,11Z,14Z)-eicosatetraenoate. It carries out the reaction (9Z)-octadecenamide + H2O = (9Z)-octadecenoate + NH4(+). This is Fatty-acid amide hydrolase 2-A (faah2a) from Danio rerio (Zebrafish).